We begin with the raw amino-acid sequence, 213 residues long: MRHKAHPGPDLELECALLRSNRAIKTLCGVDEAGRGPLCGPVVAAAVVLDLDNLPVGLNDSKQLSAKKREQLFEQIYVTSQVGVGEASVAEIDALNILHASMLAMVRAVTALQGRLVVDHALIDGNRVPATLPVPGQAVVKGDAKSLSIAAASIIAKVTRDRIMAELDRDYPHYGWAKSQGYPTQAHLQALALHGVTPHHRRSFKPVKQLLPH.

Positions 25-213 (KTLCGVDEAG…FKPVKQLLPH (189 aa)) constitute an RNase H type-2 domain. Positions 31, 32, and 124 each coordinate a divalent metal cation.

The protein belongs to the RNase HII family. Mn(2+) is required as a cofactor. The cofactor is Mg(2+).

Its subcellular location is the cytoplasm. It carries out the reaction Endonucleolytic cleavage to 5'-phosphomonoester.. Endonuclease that specifically degrades the RNA of RNA-DNA hybrids. This Magnetococcus marinus (strain ATCC BAA-1437 / JCM 17883 / MC-1) protein is Ribonuclease HII.